The chain runs to 282 residues: Probable endonuclease 4 (282 aa).

Zn(2+) is bound by residues His-66, His-106, Glu-143, Asp-176, His-179, His-213, Asp-226, His-228, and Glu-258.

The protein belongs to the AP endonuclease 2 family. It depends on Zn(2+) as a cofactor.

The enzyme catalyses Endonucleolytic cleavage to 5'-phosphooligonucleotide end-products.. In terms of biological role, endonuclease IV plays a role in DNA repair. It cleaves phosphodiester bonds at apurinic or apyrimidinic (AP) sites, generating a 3'-hydroxyl group and a 5'-terminal sugar phosphate. The polypeptide is Probable endonuclease 4 (Aquifex aeolicus (strain VF5)).